The following is a 132-amino-acid chain: Small ribosomal subunit protein uS8 (132 aa).

The protein belongs to the universal ribosomal protein uS8 family. As to quaternary structure, part of the 30S ribosomal subunit. Contacts proteins S5 and S12.

Functionally, one of the primary rRNA binding proteins, it binds directly to 16S rRNA central domain where it helps coordinate assembly of the platform of the 30S subunit. The chain is Small ribosomal subunit protein uS8 from Mycobacterium leprae (strain Br4923).